Reading from the N-terminus, the 357-residue chain is MSFFADLPKDNKKCIKIGSPLALSLSDCLACSGCVSADEAGALSEDLSFVLDLSPQTSFVLSPQSKINIFNLYREDGMEYREFEAVLSSFLRSKFNIHRIVDTSYLRSKIYEETYREYMATNHLIVSACPGVVTYIERTAPYLIGYLSRVKSPQQMAFSLVKGSRTVSVMPCQDKKLENGRDGVKFDFILTTRGFCKALDSLGFRRPARASGKSLCSMEEAETTQWNIGTSSGGYAEFILGKHCVVETREIRNGIKEHLLDDGRTISQITGLENSINYFKSSKTKGPRHKMTEIFLCKNGCIGGPGQERVNDVEMDIREYDRNGREQPRIFYSSPGLEEKRVFREVKAKRVDLRVDW.

Positions 14, 28, 31, 34, 129, 172, 297, and 301 each coordinate [4Fe-4S] cluster.

It belongs to the NARF family.

In terms of biological role, component of the cytosolic Fe/S protein assembly machinery. May play a role in the transfer of pre-assembled Fe/S clusters to target apoproteins. In Encephalitozoon cuniculi (strain GB-M1) (Microsporidian parasite), this protein is Cytosolic Fe-S cluster assembly factor NAR1 (NAR1).